The following is a 160-amino-acid chain: MAKVDVVERVTEIIAEVGAPLGIELVDLEYKREGRDMVVRVFLEKREGGINLDDCAEVSRQLSDILDVEDFMPERYTLEVSSPGICRPLKKVVDYERFMGHLIKVKTFEMLPDEAGNKRKTFTGKLTGIADGVIGIDLTEGQHARVPLDKVAKAHLEFEF.

Belongs to the RimP family.

Its subcellular location is the cytoplasm. In terms of biological role, required for maturation of 30S ribosomal subunits. The protein is Ribosome maturation factor RimP of Geobacter sp. (strain M21).